We begin with the raw amino-acid sequence, 78 residues long: Sec-independent protein translocase protein TatA (78 aa).

A helical membrane pass occupies residues 1-21 (MGSLSIWHWIVVIAVVLLLFG). Residues 43–60 (LQDDEKTAEKSEPVKSID) show a composition bias toward basic and acidic residues. The interval 43-78 (LQDDEKTAEKSEPVKSIDHTSTPGATNRTDVGSKAV) is disordered. Residues 61–72 (HTSTPGATNRTD) are compositionally biased toward polar residues.

It belongs to the TatA/E family. The Tat system comprises two distinct complexes: a TatABC complex, containing multiple copies of TatA, TatB and TatC subunits, and a separate TatA complex, containing only TatA subunits. Substrates initially bind to the TatABC complex, which probably triggers association of the separate TatA complex to form the active translocon.

It localises to the cell inner membrane. Its function is as follows. Part of the twin-arginine translocation (Tat) system that transports large folded proteins containing a characteristic twin-arginine motif in their signal peptide across membranes. TatA could form the protein-conducting channel of the Tat system. The sequence is that of Sec-independent protein translocase protein TatA from Rhodopseudomonas palustris (strain ATCC BAA-98 / CGA009).